A 446-amino-acid chain; its full sequence is Acyl-lipid (8-3)-desaturase (446 aa).

The region spanning 6–82 is the Cytochrome b5 heme-binding domain; that stretch reads GKTFTWEELA…MKKYYVGTLV (77 aa). Positions 41 and 64 each coordinate heme. Helical transmembrane passes span 125-145 and 150-170; these read ALIFGSLIASYYAQLFVPFVV and LQVVFAIIMGFACAQVGLNPL. The short motif at 171 to 175 is the Histidine box-1 element; it reads HDASH. The Histidine box-2 signature appears at 207-212; it reads HMLGHH. The Histidine box-3 signature appears at 387–391; the sequence is QAVHH.

This sequence belongs to the fatty acid desaturase type 1 family. The cofactor is Fe(2+).

Its subcellular location is the membrane. The enzyme catalyses an (8Z,11Z,14Z)-icosatrienoyl-containing glycerolipid + 2 Fe(II)-[cytochrome b5] + O2 + 2 H(+) = (5Z,8Z,11Z,14Z)-eicosatetraenoyl-containing glycerolipid + 2 Fe(III)-[cytochrome b5] + 2 H2O. The catalysed reaction is an (8Z,11Z,14Z,17Z)-eicosatetraenoyl-containing glycerolipid + 2 Fe(II)-[cytochrome b5] + O2 + 2 H(+) = a (5Z,8Z,11Z,14Z,17Z)-eicosapentaenoyl-containing glycerolipid + 2 Fe(III)-[cytochrome b5] + 2 H2O. Its function is as follows. Fatty acid desaturase that introduces a cis double bond at the 5-position in 20-carbon polyunsaturated fatty acids incorporated in a glycerolipid that contain a Delta(8) double bond. Involved in the conversion of di-homo-Delta-linolenic acid to arachidonic acid. Essential in the production of eicosanoids. The protein is Acyl-lipid (8-3)-desaturase (DES1) of Mortierella alpina (Oleaginous fungus).